We begin with the raw amino-acid sequence, 76 residues long: Spermatid nuclear transition protein 3 (76 aa).

The span at 1–11 (AKVTEKSWQPQ) shows a compositional bias: polar residues. Disordered stretches follow at residues 1–34 (AKVTEKSWQPQTTSTKRWKKRKTPSQPRSRGKVR) and 56–76 (VITTSRRQKRARRANKFETIP). Residues 16–34 (KRWKKRKTPSQPRSRGKVR) are compositionally biased toward basic residues.

The protein localises to the nucleus. It localises to the chromosome. Functionally, involved in nuclear basic protein transition: histones are replaced by spermatid specific proteins which are themselves replaced by protamines in late spermatids. This is Spermatid nuclear transition protein 3 (TNP3) from Sus scrofa (Pig).